The primary structure comprises 527 residues: L-aspartate oxidase (527 aa).

Residues 17-20 (TGVA), lysine 40, 48-55 (ATHYAQGG), and aspartate 212 each bind FAD. The active-site Proton donor/acceptor is the arginine 281. FAD contacts are provided by residues glutamate 364 and 380-381 (SL).

Belongs to the FAD-dependent oxidoreductase 2 family. NadB subfamily. FAD is required as a cofactor.

It localises to the cytoplasm. The catalysed reaction is L-aspartate + O2 = iminosuccinate + H2O2. The protein operates within cofactor biosynthesis; NAD(+) biosynthesis; iminoaspartate from L-aspartate (oxidase route): step 1/1. Functionally, catalyzes the oxidation of L-aspartate to iminoaspartate, the first step in the de novo biosynthesis of NAD(+). This chain is L-aspartate oxidase (nadB), found in Mycobacterium tuberculosis (strain CDC 1551 / Oshkosh).